The sequence spans 250 residues: Cell division protein ZapD (250 aa).

The protein belongs to the ZapD family. As to quaternary structure, interacts with FtsZ.

Its subcellular location is the cytoplasm. Cell division factor that enhances FtsZ-ring assembly. Directly interacts with FtsZ and promotes bundling of FtsZ protofilaments, with a reduction in FtsZ GTPase activity. This is Cell division protein ZapD from Yersinia pseudotuberculosis serotype O:1b (strain IP 31758).